Here is a 79-residue protein sequence, read N- to C-terminus: Cyclin-dependent kinases regulatory subunit 2 (79 aa).

Lysine 4 carries the N6-acetyllysine modification.

It belongs to the CKS family. As to quaternary structure, forms a homohexamer that can probably bind six kinase subunits.

Binds to the catalytic subunit of the cyclin dependent kinases and is essential for their biological function. The polypeptide is Cyclin-dependent kinases regulatory subunit 2 (CKS2) (Bos taurus (Bovine)).